Consider the following 131-residue polypeptide: Glycine cleavage system H protein (131 aa).

Residues 24–106 (RAIVGISDHA…YGEGWIMVIE (83 aa)) form the Lipoyl-binding domain. Residue K65 is modified to N6-lipoyllysine.

The protein belongs to the GcvH family. As to quaternary structure, the glycine cleavage system is composed of four proteins: P, T, L and H. It depends on (R)-lipoate as a cofactor.

Its function is as follows. The glycine cleavage system catalyzes the degradation of glycine. The H protein shuttles the methylamine group of glycine from the P protein to the T protein. The polypeptide is Glycine cleavage system H protein (Xylella fastidiosa (strain M12)).